Reading from the N-terminus, the 411-residue chain is UPF0761 membrane protein PA14_51960 (411 aa).

The next 6 membrane-spanning stretches (helical) occupy residues 36 to 56 (LFAV…IPAF), 92 to 112 (HLTW…LVTI), 132 to 152 (FLLY…GFAV), 174 to 194 (LLGL…YSAV), 207 to 229 (GGVF…VSLF), and 244 to 264 (IFLL…VLVC).

Belongs to the UPF0761 family.

The protein resides in the cell inner membrane. This is UPF0761 membrane protein PA14_51960 from Pseudomonas aeruginosa (strain UCBPP-PA14).